A 134-amino-acid polypeptide reads, in one-letter code: MSPLRPLLLALALASVPCAQGACPASADLKHSDGTRTCAKLYDKSDPYYENCCGGAELSLESGADLPYLPSNWANTASSLVVAPRCELTVWSRQGKAGKTHKFSAGTYPRLEEYRRGILGDWSNAISALYCRCS.

Residues 1 to 21 (MSPLRPLLLALALASVPCAQG) form the signal peptide.

Monomer and homooligomer; most probably hexameric. Interacts with GP2. Contains intrachain disulfide bonds.

It is found in the zymogen granule membrane. Its subcellular location is the zymogen granule lumen. Functions in exocytosis in pancreatic acinar cells regulating the fusion of zymogen granules with each other. May have a pore-forming activity on membranes and regulate exocytosis in other exocrine tissues. The polypeptide is Syncollin (SYCN) (Homo sapiens (Human)).